Here is a 311-residue protein sequence, read N- to C-terminus: MQDLAKTKINIKSPAKINLHLEVIGKREDGFHELAMIMQNIDLSDYLEFEINNEGLIKLESDCNDLSLSDDNLIVKSANLLRKKSNIDYGANIFLRKNIPIGAGLAGGSSNSAATLIGLNKLWDLNLGQEALCSLASTLGSDIPFFINGGIQLCFGRGEVLEKLDSNFEYGVILLKNPNVSVSTAETYKKYSNRFCHQYLTDREMIENIRKNLRENGLNNLNLDNQHLSIKNDLQLVVENENDSVKQALYLLSKLENCLTFSMSGSGPTCFALFKDIETAKKELTANYKLFRNKGYDSWVCTFLEKGITFI.

Residue Lys-16 is part of the active site. 100–110 (PIGAGLAGGSS) lines the ATP pocket. Asp-142 is a catalytic residue.

It belongs to the GHMP kinase family. IspE subfamily.

The catalysed reaction is 4-CDP-2-C-methyl-D-erythritol + ATP = 4-CDP-2-C-methyl-D-erythritol 2-phosphate + ADP + H(+). It functions in the pathway isoprenoid biosynthesis; isopentenyl diphosphate biosynthesis via DXP pathway; isopentenyl diphosphate from 1-deoxy-D-xylulose 5-phosphate: step 3/6. Catalyzes the phosphorylation of the position 2 hydroxy group of 4-diphosphocytidyl-2C-methyl-D-erythritol. This is 4-diphosphocytidyl-2-C-methyl-D-erythritol kinase from Prochlorococcus marinus (strain MIT 9312).